The chain runs to 421 residues: Diaminobutyrate--2-oxoglutarate transaminase (421 aa).

Lysine 267 is modified (N6-(pyridoxal phosphate)lysine).

Belongs to the class-III pyridoxal-phosphate-dependent aminotransferase family. In terms of assembly, homohexamer. The cofactor is pyridoxal 5'-phosphate.

It catalyses the reaction L-2,4-diaminobutanoate + 2-oxoglutarate = L-aspartate 4-semialdehyde + L-glutamate. The protein operates within amine and polyamine biosynthesis; ectoine biosynthesis; L-ectoine from L-aspartate 4-semialdehyde: step 1/3. In terms of biological role, catalyzes reversively the conversion of L-aspartate beta-semialdehyde (ASA) to L-2,4-diaminobutyrate (DABA) by transamination with L-glutamate. Seems to use L-glutamate specifically as the amino group donor to ASA, as it is not active with L-alanine, L-glutamine, L-aspartate and L-lysine, and is only poorly active with L-homoserine. In the reverse reaction, gamma-aminobutyric acid (GABA) and L-ornithine can also be used as amino group donors to 2-oxoglutarate, but with a reduced activity compared to that with DABA. In Halomonas elongata (strain ATCC 33173 / DSM 2581 / NBRC 15536 / NCIMB 2198 / 1H9), this protein is Diaminobutyrate--2-oxoglutarate transaminase (ectB).